The following is a 62-amino-acid chain: Large ribosomal subunit protein bL28 (62 aa).

The tract at residues methionine 1 to serine 24 is disordered. Residues alanine 14 to serine 24 show a composition bias toward polar residues.

This sequence belongs to the bacterial ribosomal protein bL28 family.

The sequence is that of Large ribosomal subunit protein bL28 from Bacillus pumilus (strain SAFR-032).